Consider the following 188-residue polypeptide: Apolipoprotein M (188 aa).

The not cleaved signal peptide spans 1–22 (MFHQIWAALLYFYGIILNSIYQ). 3 disulfide bridges follow: cysteine 23–cysteine 167, cysteine 95–cysteine 183, and cysteine 128–cysteine 157. Asparagine 135 carries N-linked (GlcNAc...) asparagine glycosylation. Residues glutamate 136 and arginine 143 each coordinate tetradecanoate.

The protein belongs to the calycin superfamily. Lipocalin family. Highly divergent. In terms of assembly, interacts with LRP2; LRP2 mediates APOM renal uptake and subsequent lysosomal degradation. As to expression, plasma protein. Expressed in liver and kidney.

It is found in the secreted. In terms of biological role, probably involved in lipid transport. Can bind sphingosine-1-phosphate, myristic acid, palmitic acid and stearic acid, retinol, all-trans-retinoic acid and 9-cis-retinoic acid. This Homo sapiens (Human) protein is Apolipoprotein M (APOM).